Reading from the N-terminus, the 841-residue chain is DNA mismatch repair protein MutS (841 aa).

Residue 596-603 (GPNMSGKS) participates in ATP binding.

Belongs to the DNA mismatch repair MutS family.

Functionally, this protein is involved in the repair of mismatches in DNA. It is possible that it carries out the mismatch recognition step. This protein has a weak ATPase activity. This chain is DNA mismatch repair protein MutS, found in Acholeplasma laidlawii (strain PG-8A).